The primary structure comprises 907 residues: Putative pentatricopeptide repeat-containing protein At5g59900 (907 aa).

PPR repeat units follow at residues Ser103–Pro137, Ser155–Lys185, Glu191–Pro225, Asp226–Val260, Asn261–Pro295, Asp296–Pro330, Ser331–Pro365, Asn366–Pro400, Asn401–Leu435, Ser436–Pro470, Thr471–Pro505, Ser506–Pro540, Asn541–Pro575, Asp576–Leu610, Asn611–Leu645, Asp646–Pro680, Asp681–Pro715, Asn716–Pro750, Asn751–Gly782, Asn786–Pro820, Asp821–Pro855, and Asp856–Pro890. Residues Gly887–Ser907 are disordered. Residues Asn891–Ser907 are compositionally biased toward low complexity.

Belongs to the PPR family. P subfamily.

In Arabidopsis thaliana (Mouse-ear cress), this protein is Putative pentatricopeptide repeat-containing protein At5g59900.